Reading from the N-terminus, the 71-residue chain is Small ribosomal subunit protein bS21 (71 aa).

Residues 43-71 are disordered; it reads TERKRAKASAVKRHAKKLARENARRTRLY. Residues 46-59 are compositionally biased toward basic residues; sequence KRAKASAVKRHAKK. The segment covering 60–71 has biased composition (basic and acidic residues); it reads LARENARRTRLY.

Belongs to the bacterial ribosomal protein bS21 family.

This is Small ribosomal subunit protein bS21 from Edwardsiella ictaluri (strain 93-146).